Consider the following 642-residue polypeptide: RNA polymerase sigma factor RpoD (642 aa).

The disordered stretch occupies residues 199–228 (HLETTAPEKPSNDNSDENEDDEESEEDADE). Residues 212–228 (NSDENEDDEESEEDADE) show a composition bias toward acidic residues. The sigma-70 factor domain-2 stretch occupies residues 403–473 (MIQANLRLVI…TRSIADQART (71 aa)). The Interaction with polymerase core subunit RpoC motif lies at 427 to 430 (DLIQ). Positions 482–558 (ETINKMNRIS…DANNVAPADA (77 aa)) are sigma-70 factor domain-3. The tract at residues 571 to 624 (ILESLTPREAKVLRMRFGIDMNTDHTLEEVGRQFDVTRERIRQIEAKALRKLRH) is sigma-70 factor domain-4. Residues 597 to 616 (LEEVGRQFDVTRERIRQIEA) constitute a DNA-binding region (H-T-H motif).

This sequence belongs to the sigma-70 factor family. RpoD/SigA subfamily. Interacts transiently with the RNA polymerase catalytic core.

The protein localises to the cytoplasm. Functionally, sigma factors are initiation factors that promote the attachment of RNA polymerase to specific initiation sites and are then released. This sigma factor is the primary sigma factor during exponential growth. This chain is RNA polymerase sigma factor RpoD, found in Neisseria gonorrhoeae.